The sequence spans 507 residues: MKNISAGHNALMVLGTSSGAGKSIITTAICRSLLRKGEVPIPFKGQNMSNNAWVDINNGEMAYSQAVQAWAAGIEPICAMNPVLLKPQGDCTSEVIHLGKSVGVVQAANYYEDWFSSGWEAIQKGLNDIATSYKKHRLILEGAGSPVEINLQHRDLTNLKLAKHLNAKCVLVADIERGGVFAQIIGTLALLKPDEKALIQGIIINRFRGDISLFEKGRQWIEEESKIPVLGIMPWLNEIFPPEDSLDLLERKHKKTKAEIQIAVIKLPSLSNFADLDPLEAEPTIQLNWIQPGDYLGNPNAVIIPGSKQTLKDLQSLQSSGLGNQIKEFASSGGTVFGICGGLQILGEKLEDPLGIEQSFLETSISELEGLSLIPIKTIFHSKKSLTKKDVISKWPDESRIMGFELHHGESTPTNSQKVKVKDLCNETSLGWVNEECNPIKAAGTYLHGIFDNGTWRRLWINQIRKKANLYELPLLEENHDAKREKVINRLTDVFEENINLEYLLKT.

Positions 259–456 (EIQIAVIKLP…LHGIFDNGTW (198 aa)) constitute a GATase cobBQ-type domain. Cysteine 340 functions as the Nucleophile in the catalytic mechanism. The active site involves histidine 448.

Belongs to the CobB/CobQ family. CobQ subfamily.

The protein operates within cofactor biosynthesis; adenosylcobalamin biosynthesis. Functionally, catalyzes amidations at positions B, D, E, and G on adenosylcobyrinic A,C-diamide. NH(2) groups are provided by glutamine, and one molecule of ATP is hydrogenolyzed for each amidation. The chain is Cobyric acid synthase from Prochlorococcus marinus (strain SARG / CCMP1375 / SS120).